The following is a 394-amino-acid chain: Protein maelstrom (394 aa).

The HMG box DNA-binding region spans 2 to 69; the sequence is APKKQNGFMM…ARRDKRGSLN (68 aa). A disordered region spans residues 44-93; sequence TQQRGPYNSDAKDANAARRDKRGSLNGHGQVDKAQREAAESLMDKAQREA. Positions 73-93 are enriched in basic and acidic residues; the sequence is QVDKAQREAAESLMDKAQREA.

The protein belongs to the maelstrom family.

The protein resides in the cytoplasm. Its subcellular location is the nucleus. Its function is as follows. Involved both in the piRNA and miRNA metabolic processes. As a component of the meiotic nuage, plays a central role during oogenesis by repressing transposable elements and preventing their mobilization, which is essential for the germline integrity. Repression of transposable elements is mediated via the piRNA metabolic process, which mediates the repression of transposable elements during meiosis by forming complexes composed of piRNAs and Piwi proteins and governs the repression of transposons. As a nuclear component, it is required for proper differentiation in the germline stem cell (GSC) lineage by repressing microRNA-7 (miR-7), thereby acting as an indirect regulator of bag-of-marbles (Bam). Acts by binding to the promoter of miR-7 gene and repressing its expression; miR-7 repression alleviates the Bam repression by miR-7, thereby allowing differentiation in the germline stem cell (GSC) lineage. This is Protein maelstrom (mael) from Drosophila simulans (Fruit fly).